Reading from the N-terminus, the 207-residue chain is Ribosomal RNA small subunit methyltransferase G (207 aa).

S-adenosyl-L-methionine is bound by residues Gly75, Leu80, 126–127 (VE), and Arg141.

This sequence belongs to the methyltransferase superfamily. RNA methyltransferase RsmG family.

It is found in the cytoplasm. It carries out the reaction guanosine(527) in 16S rRNA + S-adenosyl-L-methionine = N(7)-methylguanosine(527) in 16S rRNA + S-adenosyl-L-homocysteine. In terms of biological role, specifically methylates the N7 position of guanine in position 527 of 16S rRNA. This is Ribosomal RNA small subunit methyltransferase G from Psychromonas ingrahamii (strain DSM 17664 / CCUG 51855 / 37).